We begin with the raw amino-acid sequence, 105 residues long: UPF0235 protein RF_1332 (105 aa).

Belongs to the UPF0235 family.

The protein is UPF0235 protein RF_1332 of Rickettsia felis (strain ATCC VR-1525 / URRWXCal2) (Rickettsia azadi).